The following is a 944-amino-acid chain: 2-oxoglutarate dehydrogenase E1 component (944 aa).

Positions 915-944 (RRRSSPAEGDPTVHKKEQERIVSDSLTRKN) are disordered. Residues 925–936 (PTVHKKEQERIV) are compositionally biased toward basic and acidic residues.

Belongs to the alpha-ketoglutarate dehydrogenase family. In terms of assembly, homodimer. Part of the 2-oxoglutarate dehydrogenase (OGDH) complex composed of E1 (2-oxoglutarate dehydrogenase), E2 (dihydrolipoamide succinyltransferase) and E3 (dihydrolipoamide dehydrogenase); the complex contains multiple copies of the three enzymatic components (E1, E2 and E3). It depends on thiamine diphosphate as a cofactor.

It catalyses the reaction N(6)-[(R)-lipoyl]-L-lysyl-[protein] + 2-oxoglutarate + H(+) = N(6)-[(R)-S(8)-succinyldihydrolipoyl]-L-lysyl-[protein] + CO2. Functionally, E1 component of the 2-oxoglutarate dehydrogenase (OGDH) complex which catalyzes the decarboxylation of 2-oxoglutarate, the first step in the conversion of 2-oxoglutarate to succinyl-CoA and CO(2). The chain is 2-oxoglutarate dehydrogenase E1 component from Bacillus velezensis (strain DSM 23117 / BGSC 10A6 / LMG 26770 / FZB42) (Bacillus amyloliquefaciens subsp. plantarum).